The following is a 667-amino-acid chain: Bicarbonate transport ATP-binding protein CmpC (667 aa).

The ABC transporter domain maps to 5 to 239 (VAVDNIDKVF…RPRKRMEVVE (235 aa)). 42 to 49 (GHSGCGKS) provides a ligand contact to ATP. The tract at residues 281 to 667 (LELGYVPLVA…DNPTPAPVFA (387 aa)) is cmpA-like.

It belongs to the ABC transporter superfamily. Nitrate/nitrite/cyanate uptake transporter (NitT) (TC 3.A.1.16) family. The complex is composed of two ATP-binding proteins (CmpC and CmpD), a transmembrane protein (CmpB) and a solute-binding protein (CmpA).

It is found in the cell inner membrane. Functionally, part of the ABC transporter complex CmpABCD involved in bicarbonate transport. Responsible for energy coupling to the transport system. The polypeptide is Bicarbonate transport ATP-binding protein CmpC (cmpC) (Synechocystis sp. (strain ATCC 27184 / PCC 6803 / Kazusa)).